Reading from the N-terminus, the 276-residue chain is NADPH-dependent 7-cyano-7-deazaguanine reductase (276 aa).

83 to 85 (IES) is a substrate binding site. Residue 85–86 (SK) coordinates NADPH. Cysteine 184 serves as the catalytic Thioimide intermediate. Aspartate 191 acts as the Proton donor in catalysis. 223–224 (HE) serves as a coordination point for substrate. 252 to 253 (RG) lines the NADPH pocket.

This sequence belongs to the GTP cyclohydrolase I family. QueF type 2 subfamily. Homodimer.

The protein localises to the cytoplasm. The catalysed reaction is 7-aminomethyl-7-carbaguanine + 2 NADP(+) = 7-cyano-7-deazaguanine + 2 NADPH + 3 H(+). It functions in the pathway tRNA modification; tRNA-queuosine biosynthesis. Its function is as follows. Catalyzes the NADPH-dependent reduction of 7-cyano-7-deazaguanine (preQ0) to 7-aminomethyl-7-deazaguanine (preQ1). The chain is NADPH-dependent 7-cyano-7-deazaguanine reductase from Pseudomonas fluorescens (strain ATCC BAA-477 / NRRL B-23932 / Pf-5).